The primary structure comprises 323 residues: 1-aminocyclopropane-1-carboxylate oxidase 4 (323 aa).

Met-1 bears the N-acetylmethionine mark. The Fe2OG dioxygenase domain occupies 153-254 (PTFGTKVSNY…RMSIASFYNP (102 aa)). Fe cation-binding residues include His-177, Asp-179, and His-234. Arg-245 is a binding site for 2-oxoglutarate.

Belongs to the iron/ascorbate-dependent oxidoreductase family. Fe cation serves as cofactor. Expressed in vegetative tissues. Expressed constitutively at a low level in leaves and blades.

It carries out the reaction 1-aminocyclopropane-1-carboxylate + L-ascorbate + O2 = ethene + L-dehydroascorbate + hydrogen cyanide + CO2 + 2 H2O. It participates in alkene biosynthesis; ethylene biosynthesis via S-adenosyl-L-methionine; ethylene from S-adenosyl-L-methionine: step 2/2. Enzyme involved in the ethylene biosynthesis. May promote stem elongation by maximizing the extensibility cells, possibly by activating ethylene biosynthesis, in response to very-long-chain fatty acids (VLCFAs C20:0 to C30:0). This chain is 1-aminocyclopropane-1-carboxylate oxidase 4 (ACO4), found in Arabidopsis thaliana (Mouse-ear cress).